The primary structure comprises 380 residues: Elongation factor Ts, mitochondrial (380 aa).

The protein belongs to the EF-Ts family.

It localises to the mitochondrion. Associates with the EF-Tu.GDP complex and induces the exchange of GDP to GTP. It remains bound to the aminoacyl-tRNA.EF-Tu.GTP complex up to the GTP hydrolysis stage on the ribosome. This is Elongation factor Ts, mitochondrial from Plasmodium chabaudi chabaudi.